Consider the following 57-residue polypeptide: Orphan toxin OrtT (57 aa).

The next 2 helical transmembrane spans lie at 6 to 26 (HMLV…WFLS) and 34 to 54 (FLSA…ALLF).

The protein belongs to the GhoT/OrtT toxin family.

The protein localises to the cell inner membrane. In terms of biological role, acts as an orphan toxin which is important for maintaining cell fitness during stress related to the stringent response. Increases the formation of persister cells. Has no known antitoxin. The protein is Orphan toxin OrtT of Escherichia coli O6:H1 (strain CFT073 / ATCC 700928 / UPEC).